Reading from the N-terminus, the 209-residue chain is Imidazole glycerol phosphate synthase subunit HisH (209 aa).

The Glutamine amidotransferase type-1 domain occupies 1-205 (MIAIIDYGMG…KGVVEAWKSS (205 aa)). C79 functions as the Nucleophile in the catalytic mechanism. Catalysis depends on residues H180 and E182.

As to quaternary structure, heterodimer of HisH and HisF.

The protein localises to the cytoplasm. It catalyses the reaction 5-[(5-phospho-1-deoxy-D-ribulos-1-ylimino)methylamino]-1-(5-phospho-beta-D-ribosyl)imidazole-4-carboxamide + L-glutamine = D-erythro-1-(imidazol-4-yl)glycerol 3-phosphate + 5-amino-1-(5-phospho-beta-D-ribosyl)imidazole-4-carboxamide + L-glutamate + H(+). It carries out the reaction L-glutamine + H2O = L-glutamate + NH4(+). Its pathway is amino-acid biosynthesis; L-histidine biosynthesis; L-histidine from 5-phospho-alpha-D-ribose 1-diphosphate: step 5/9. Functionally, IGPS catalyzes the conversion of PRFAR and glutamine to IGP, AICAR and glutamate. The HisH subunit catalyzes the hydrolysis of glutamine to glutamate and ammonia as part of the synthesis of IGP and AICAR. The resulting ammonia molecule is channeled to the active site of HisF. This is Imidazole glycerol phosphate synthase subunit HisH from Bacillus mycoides (strain KBAB4) (Bacillus weihenstephanensis).